The primary structure comprises 327 residues: Ribosomal RNA small subunit methyltransferase H (327 aa).

S-adenosyl-L-methionine contacts are provided by residues 41–43, D60, Y87, D108, and Q115; that span reads GGH. The segment at 292–327 is disordered; sequence AERADEQETLENPRAASARLRAVERLRETTTPGSAR.

The protein belongs to the methyltransferase superfamily. RsmH family.

It is found in the cytoplasm. It carries out the reaction cytidine(1402) in 16S rRNA + S-adenosyl-L-methionine = N(4)-methylcytidine(1402) in 16S rRNA + S-adenosyl-L-homocysteine + H(+). In terms of biological role, specifically methylates the N4 position of cytidine in position 1402 (C1402) of 16S rRNA. The polypeptide is Ribosomal RNA small subunit methyltransferase H (Kocuria rhizophila (strain ATCC 9341 / DSM 348 / NBRC 103217 / DC2201)).